Reading from the N-terminus, the 149-residue chain is Transcriptional regulator MraZ (149 aa).

SpoVT-AbrB domains are found at residues 6-52 (RSHR…PYPD) and 81-124 (AEEM…DQSK).

This sequence belongs to the MraZ family. As to quaternary structure, forms oligomers.

It localises to the cytoplasm. The protein localises to the nucleoid. The chain is Transcriptional regulator MraZ from Nitratidesulfovibrio vulgaris (strain ATCC 29579 / DSM 644 / CCUG 34227 / NCIMB 8303 / VKM B-1760 / Hildenborough) (Desulfovibrio vulgaris).